Here is a 241-residue protein sequence, read N- to C-terminus: Phosphoribosylaminoimidazole-succinocarboxamide synthase (241 aa).

It belongs to the SAICAR synthetase family.

It catalyses the reaction 5-amino-1-(5-phospho-D-ribosyl)imidazole-4-carboxylate + L-aspartate + ATP = (2S)-2-[5-amino-1-(5-phospho-beta-D-ribosyl)imidazole-4-carboxamido]succinate + ADP + phosphate + 2 H(+). It functions in the pathway purine metabolism; IMP biosynthesis via de novo pathway; 5-amino-1-(5-phospho-D-ribosyl)imidazole-4-carboxamide from 5-amino-1-(5-phospho-D-ribosyl)imidazole-4-carboxylate: step 1/2. This chain is Phosphoribosylaminoimidazole-succinocarboxamide synthase, found in Caldivirga maquilingensis (strain ATCC 700844 / DSM 13496 / JCM 10307 / IC-167).